The sequence spans 1003 residues: Helicase-like transcription factor (1003 aa).

Position 27 is an omega-N-methylarginine (R27). The tract at residues 38–287 (EFQDIIPPDD…FSVKERPENV (250 aa)) is DNA-binding. Residue K112 forms a Glycyl lysine isopeptide (Lys-Gly) (interchain with G-Cter in SUMO2) linkage. At Y195 the chain carries Phosphotyrosine; by JAK2. K211 is covalently cross-linked (Glycyl lysine isopeptide (Lys-Gly) (interchain with G-Cter in SUMO2)). 294 to 301 (DDMGLGKT) provides a ligand contact to ATP. The disordered stretch occupies residues 317–373 (PLLSKRGKKNHPGKEYKDETIKRRGSNMDKKEDGHSESSTCGEEPSISGTPEKSSCT). Basic and acidic residues predominate over residues 328–352 (PGKEYKDETIKRRGSNMDKKEDGHS). Residues 353 to 373 (ESSTCGEEPSISGTPEKSSCT) are compositionally biased toward polar residues. A phosphoserine mark is found at S394, S395, and S397. In terms of domain architecture, Helicase ATP-binding spans 433–600 (DSKFALTFFA…WSLLSFLKLK (168 aa)). The short motif at 551-554 (DEGH) is the DEGH box element. Residue T730 is modified to Phosphothreonine. An RING-type zinc finger spans residues 754 to 795 (CAICLDSLTFPVITHCAHVFCKPCICQVIHSEQPHAKCPLCR). Residues 831–990 (ALMHALIELR…TKKTDANDMK (160 aa)) enclose the Helicase C-terminal domain. The segment at 919–1003 (SRVFLMDPAW…INEIRTLIDL (85 aa)) is interaction with SP1 and SP3.

This sequence belongs to the SNF2/RAD54 helicase family. RAD16 subfamily. Interacts with SP1 and SP3 independently of DNA; the interaction with these transcriptional factors may be required for basal transcription of target genes. Interacts with EGR1; the interaction requires prior binding to DNA and represses c-Rel via a DNA looping mechanism. Interacts with GATA4. Interacts with PCNA; the interaction promotes polyubiquitination of PCNA through association with the UBE2B-RAD18 and UBE2V2-UBE2N ubiquitin ligase complexes. Interacts with RAD18, SHPRH, UBE2V2 and UBE2N. Expressed in brain, heart, kidney, liver, lung, pancreas, placenta and skeletal muscle.

It is found in the cytoplasm. It localises to the nucleus. Its subcellular location is the nucleolus. The protein resides in the nucleoplasm. It catalyses the reaction S-ubiquitinyl-[E2 ubiquitin-conjugating enzyme]-L-cysteine + [acceptor protein]-L-lysine = [E2 ubiquitin-conjugating enzyme]-L-cysteine + N(6)-ubiquitinyl-[acceptor protein]-L-lysine.. Its pathway is protein modification; protein ubiquitination. In terms of biological role, has both helicase and E3 ubiquitin ligase activities. Possesses intrinsic ATP-dependent nucleosome-remodeling activity. This activity may be required for transcriptional activation or repression of specific target promoters. These may include the SERPINE1, to which this protein can bind directly. Plays a role in error-free postreplication repair (PRR) of damaged DNA and maintains genomic stability through acting as a ubiquitin ligase for 'Lys-63'-linked polyubiquitination of chromatin-bound PCNA. In Mus musculus (Mouse), this protein is Helicase-like transcription factor (Hltf).